The following is a 430-amino-acid chain: UDP-N-acetylglucosamine 1-carboxyvinyltransferase 1 (430 aa).

Lys-22 to Asn-23 contacts phosphoenolpyruvate. Arg-102 is a binding site for UDP-N-acetyl-alpha-D-glucosamine. Cys-126 acts as the Proton donor in catalysis. Residue Cys-126 is modified to 2-(S-cysteinyl)pyruvic acid O-phosphothioketal. UDP-N-acetyl-alpha-D-glucosamine is bound by residues Arg-131–Leu-135, Lys-172–Val-175, Asp-317, and Ile-339.

The protein belongs to the EPSP synthase family. MurA subfamily.

It is found in the cytoplasm. It carries out the reaction phosphoenolpyruvate + UDP-N-acetyl-alpha-D-glucosamine = UDP-N-acetyl-3-O-(1-carboxyvinyl)-alpha-D-glucosamine + phosphate. It functions in the pathway cell wall biogenesis; peptidoglycan biosynthesis. In terms of biological role, cell wall formation. Adds enolpyruvyl to UDP-N-acetylglucosamine. This is UDP-N-acetylglucosamine 1-carboxyvinyltransferase 1 from Mesorhizobium japonicum (strain LMG 29417 / CECT 9101 / MAFF 303099) (Mesorhizobium loti (strain MAFF 303099)).